Consider the following 53-residue polypeptide: Natriuretic peptide DNP-2 (53 aa).

A disulfide bond links C7 and C23. A propeptide spanning residues 39–53 (IIRDLHPDSKQSQAA) is cleaved from the precursor.

Belongs to the natriuretic peptide family. Expressed by the venom gland.

Its subcellular location is the secreted. Functionally, exhibits vasodilator, natriuretic and diuretic properties in animal models and human tissues. Acts by stimulating cGMP via the natriuretic peptide receptor 1 (NPR1). Is a poor agonist of the atrial natriuretic peptide receptor 2 (NPR2). Is not degraded by neutral endopeptidase (NEP/MME). Binds to atrial natriuretic peptide clearance receptor (NPR-C/NPR3), which may be responsible of the removal of DNP from the circulation. Increases calcium uptake and induces histamine release from rat peritoneal mast cells. Increases calcium-activated potassium (KCa) current in gastric antral circular smooth muscle cells by increasing cGMP production and activating inositol trisphosphate receptors (IP3Rs). In vivo, reduces both systolic and diastolic blood pressure with no effect on heart rate, when intravenously injected in conscious rabbits. The sequence is that of Natriuretic peptide DNP-2 from Dendroaspis angusticeps (Eastern green mamba).